Consider the following 260-residue polypeptide: Carbonic anhydrase 2 (260 aa).

S2 carries the post-translational modification N-acetylserine. Residue S2 is modified to Phosphoserine. The 257-residue stretch at 3–259 (HHWGYGKHNG…LKNRQVRGFP (257 aa)) folds into the Alpha-carbonic anhydrase domain. Residue H64 is the Proton donor/acceptor of the active site. The Zn(2+) site is built by H94, H96, and H119. Phosphoserine occurs at positions 165 and 172. 198–199 (TT) contributes to the substrate binding site.

Belongs to the alpha-carbonic anhydrase family. In terms of assembly, interacts with SLC4A4. Interaction with SLC4A7 regulates SLC4A7 transporter activity. The cofactor is Zn(2+).

The protein resides in the cytoplasm. Its subcellular location is the cell membrane. The enzyme catalyses hydrogencarbonate + H(+) = CO2 + H2O. It carries out the reaction urea = cyanamide + H2O. Its activity is regulated as follows. Inhibited by acetazolamide. Its function is as follows. Catalyzes the reversible hydration of carbon dioxide. Can also hydrate cyanamide to urea. Involved in the regulation of fluid secretion into the anterior chamber of the eye. Essential for bone resorption and osteoclast differentiation. Contributes to intracellular pH regulation in the duodenal upper villous epithelium during proton-coupled peptide absorption. Stimulates the chloride-bicarbonate exchange activity of SLC26A6. In Bos taurus (Bovine), this protein is Carbonic anhydrase 2 (CA2).